Consider the following 319-residue polypeptide: Beta-ketoacyl-[acyl-carrier-protein] synthase III (319 aa).

Active-site residues include C115 and H246. The ACP-binding stretch occupies residues 247–251 (QANLR). N276 is an active-site residue.

Belongs to the thiolase-like superfamily. FabH family. As to quaternary structure, homodimer.

It is found in the cytoplasm. It carries out the reaction malonyl-[ACP] + acetyl-CoA + H(+) = 3-oxobutanoyl-[ACP] + CO2 + CoA. Its pathway is lipid metabolism; fatty acid biosynthesis. In terms of biological role, catalyzes the condensation reaction of fatty acid synthesis by the addition to an acyl acceptor of two carbons from malonyl-ACP. Catalyzes the first condensation reaction which initiates fatty acid synthesis and may therefore play a role in governing the total rate of fatty acid production. Possesses both acetoacetyl-ACP synthase and acetyl transacylase activities. Its substrate specificity determines the biosynthesis of branched-chain and/or straight-chain of fatty acids. The sequence is that of Beta-ketoacyl-[acyl-carrier-protein] synthase III from Coxiella burnetii (strain RSA 331 / Henzerling II).